We begin with the raw amino-acid sequence, 1226 residues long: AF4/FMR2 family member 3 (1226 aa).

The segment covering 24–37 has biased composition (basic and acidic residues); sequence RNALRRKERERRNQ. 5 disordered regions span residues 24–65, 116–164, 197–299, 323–496, and 523–728; these read RNAL…GDEL, SRAQ…RATQ, ERPP…GETN, KVEP…SNQY, and IKST…SINA. The span at 42-52 shows a compositional bias: polar residues; it reads DDGTFNSSYSL. A compositionally biased stretch (low complexity) spans 123-132; that stretch reads SSICSTTTST. 2 stretches are compositionally biased toward polar residues: residues 251–261 and 334–344; these read LKSSSETSVHC and KDSQLVSSGHN. The span at 381-392 shows a compositional bias: low complexity; that stretch reads QQAAQRTALRAL. Residues 396–408 are compositionally biased toward polar residues; that stretch reads AVVQQPNCRTSVP. Residues 409–445 are compositionally biased toward low complexity; that stretch reads SSKGSSSSSSSGSSSSSSDSESSSGSDSETESSSSES. Residues 485 to 496 show a composition bias toward polar residues; sequence QNESHGSESNQY. The segment covering 523–533 has biased composition (basic and acidic residues); sequence IKSTCKEEQRP. Composition is skewed to low complexity over residues 550-561 and 569-579; these read PPAAVAVAVSAA and CAPAENAPAPA. Over residues 589–607 the composition is skewed to basic and acidic residues; sequence RRTERTSAGDGANCHRPEE. Residues 668–678 are compositionally biased toward low complexity; that stretch reads TESSSSSSSSD. Polar residues predominate over residues 692–705; the sequence is KAQTVAASASSGND. Serine 755 bears the Phosphoserine mark. 3 disordered regions span residues 783-856, 879-964, and 1100-1138; these read PQEP…LSAN, PISP…RDCK, and AAQA…SLSN. Positions 830 to 842 are enriched in basic and acidic residues; that stretch reads REIKKSQGEKDSS. Positions 843–856 are enriched in polar residues; that stretch reads SRLATSTSNTLSAN. At serine 881 the chain carries Phosphoserine. The segment covering 894 to 909 has biased composition (polar residues); that stretch reads EDLTSSSRPNGNSLFT.

The protein belongs to the AF4 family. In terms of tissue distribution, preferentially expressed in lymphoid tissues, highest levels being found in the thymus.

It localises to the nucleus. In terms of biological role, putative transcription activator that may function in lymphoid development and oncogenesis. Binds, in vitro, to double-stranded DNA. The polypeptide is AF4/FMR2 family member 3 (Homo sapiens (Human)).